The chain runs to 292 residues: Phosphoribulokinase 2 (292 aa).

Residue 12-20 (GSSGAGTST) coordinates ATP.

This sequence belongs to the phosphoribulokinase family.

The enzyme catalyses D-ribulose 5-phosphate + ATP = D-ribulose 1,5-bisphosphate + ADP + H(+). The protein operates within carbohydrate biosynthesis; Calvin cycle. This Cereibacter sphaeroides (Rhodobacter sphaeroides) protein is Phosphoribulokinase 2 (prkB).